Reading from the N-terminus, the 215-residue chain is Adenylate kinase (215 aa).

10–15 (GAGKGT) contacts ATP. An NMP region spans residues 30 to 59 (STGDMLRAAVKAGSPLGQQVKGVMDSGGLV). Residues Thr-31, Arg-36, 57–59 (GLV), 85–88 (GFPR), and Gln-92 each bind AMP. The LID stretch occupies residues 122 to 159 (GRRVHPASGRVYHTEHNPPKVAGKDDVTGEELIQREDD). Residues Arg-123 and 132-133 (VY) each bind ATP. AMP-binding residues include Arg-156 and Arg-167. Gly-201 contacts ATP.

It belongs to the adenylate kinase family. As to quaternary structure, monomer.

The protein resides in the cytoplasm. The catalysed reaction is AMP + ATP = 2 ADP. The protein operates within purine metabolism; AMP biosynthesis via salvage pathway; AMP from ADP: step 1/1. Functionally, catalyzes the reversible transfer of the terminal phosphate group between ATP and AMP. Plays an important role in cellular energy homeostasis and in adenine nucleotide metabolism. The polypeptide is Adenylate kinase (Pseudomonas aeruginosa (strain LESB58)).